A 356-amino-acid polypeptide reads, in one-letter code: Nicotinate-nucleotide--dimethylbenzimidazole phosphoribosyltransferase (356 aa).

The active-site Proton acceptor is glutamate 317.

It belongs to the CobT family. In terms of assembly, homodimer.

It carries out the reaction 5,6-dimethylbenzimidazole + nicotinate beta-D-ribonucleotide = alpha-ribazole 5'-phosphate + nicotinate + H(+). Its pathway is nucleoside biosynthesis; alpha-ribazole biosynthesis; alpha-ribazole from 5,6-dimethylbenzimidazole: step 1/2. In terms of biological role, catalyzes the synthesis of alpha-ribazole-5'-phosphate from nicotinate mononucleotide (NAMN) and 5,6-dimethylbenzimidazole (DMB). This chain is Nicotinate-nucleotide--dimethylbenzimidazole phosphoribosyltransferase, found in Salmonella paratyphi C (strain RKS4594).